A 107-amino-acid polypeptide reads, in one-letter code: Glutaredoxin 4 (107 aa).

The 103-residue stretch at Ile4–His106 folds into the Glutaredoxin domain. Residue Lys21 coordinates glutathione. Cys29 lines the [2Fe-2S] cluster pocket. Glutathione-binding positions include Arg58, Phe70, and Cys83 to Asp84.

The protein belongs to the glutaredoxin family. Monothiol subfamily. As to quaternary structure, homodimer.

It localises to the cytoplasm. Functionally, monothiol glutaredoxin involved in the biogenesis of iron-sulfur clusters. The polypeptide is Glutaredoxin 4 (grxD) (Haemophilus ducreyi (strain 35000HP / ATCC 700724)).